We begin with the raw amino-acid sequence, 432 residues long: Adenylosuccinate synthetase (432 aa).

GTP is bound by residues 13 to 19 and 41 to 43; these read GDEGKGK and GHT. The active-site Proton acceptor is Asp14. Mg(2+) contacts are provided by Asp14 and Gly41. IMP-binding positions include 14–17, 39–42, Thr130, Arg144, Gln225, Thr240, and Arg304; these read DEGK and NAGH. The Proton donor role is filled by His42. 300–306 provides a ligand contact to substrate; it reads AVTGRPR. Residues Arg306, 332–334, and 415–417 contribute to the GTP site; these read KLD and STG.

It belongs to the adenylosuccinate synthetase family. In terms of assembly, homodimer. Mg(2+) serves as cofactor.

It localises to the cytoplasm. It catalyses the reaction IMP + L-aspartate + GTP = N(6)-(1,2-dicarboxyethyl)-AMP + GDP + phosphate + 2 H(+). The protein operates within purine metabolism; AMP biosynthesis via de novo pathway; AMP from IMP: step 1/2. Plays an important role in the de novo pathway of purine nucleotide biosynthesis. Catalyzes the first committed step in the biosynthesis of AMP from IMP. The sequence is that of Adenylosuccinate synthetase from Actinobacillus pleuropneumoniae serotype 5b (strain L20).